The primary structure comprises 529 residues: Delayed-rectifier potassium channel regulatory subunit KCNS1 (529 aa).

Residues 1–217 lie on the Cytoplasmic side of the membrane; that stretch reads MLMLLVRGTH…LTMENPGYSL (217 aa). The helical transmembrane segment at 218–239 threads the bilayer; the sequence is PSKLFSCVSISVVLASIAAMCI. Topologically, residues 240–270 are extracellular; sequence HSLPEYQAREAAAAVAAVAAGRSPEGVRDDP. Residues 271–293 form a helical membrane-spanning segment; that stretch reads VLRRLEYFCIAWFSFEVSSRLLL. The Cytoplasmic segment spans residues 294 to 304; that stretch reads APSTRNFFCHP. Residues 305-322 form a helical membrane-spanning segment; sequence LNLIDIVSVLPFYLTLLA. Over 323-340 the chain is Extracellular; that stretch reads GVALGDQGGTGGKELGHL. A helical; Voltage-sensor membrane pass occupies residues 341-361; it reads GKVVQVFRLMRIFRVLKLARH. The Cytoplasmic portion of the chain corresponds to 362–376; it reads STGLRSLGATLKHSY. The chain crosses the membrane as a helical span at residues 377 to 398; sequence REVGILLLYLAVGVSVFSGVAY. Topologically, residues 399–411 are extracellular; that stretch reads TAEKEEDVGFNTI. An intramembrane region (helical) is located at residues 412–423; it reads PACWWWGTVSMT. Positions 424–429 match the Selectivity filter motif; that stretch reads TVGYGD. The stretch at 424 to 431 is an intramembrane region; that stretch reads TVGYGDVV. The Extracellular segment spans residues 432–438; sequence PVTVAGK. A helical membrane pass occupies residues 439 to 467; it reads LAASGCILGGILVVALPITIIFNKFSHFY. Residues 468-529 lie on the Cytoplasmic side of the membrane; that stretch reads RRQKALEAAV…PSEPPHPQMY (62 aa). Residues 494 to 529 form a disordered region; the sequence is GVSEASLETSRETSQEGRSADLETQAPSEPPHPQMY. Basic and acidic residues predominate over residues 502–514; that stretch reads TSRETSQEGRSAD.

Belongs to the potassium channel family. S (TC 1.A.1.2) subfamily. Kv9.1/KCNS1 sub-subfamily. Heterotetramer with KCNB1. Heterotetramer with KCNB2. Does not form homomultimers.

It is found in the cell membrane. Functionally, potassium channel regulatory subunit that modulate the delayed rectifier voltage-gated potassium channel activity of KCNB1 and KCNB2 by altering their kinetics, expression levels, and shifting the half-inactivation potential to more polarized values. While it does not form functional channels on its own, it can form functional heterotetrameric channels with KCNB1 and KCNB2. Each regulatory subunit has unique regulatory properties that can lead to extensive inhibition, significant changes in kinetics, and/or substantial shifts in the voltage dependencies of the inactivation process. This is Delayed-rectifier potassium channel regulatory subunit KCNS1 from Chlorocebus aethiops (Green monkey).